Here is a 624-residue protein sequence, read N- to C-terminus: Dihydroxy-acid dehydratase (624 aa).

D81 provides a ligand contact to Mg(2+). [2Fe-2S] cluster is bound at residue C122. 2 residues coordinate Mg(2+): D123 and K124. N6-carboxylysine is present on K124. Residue C195 participates in [2Fe-2S] cluster binding. Residue E499 participates in Mg(2+) binding. The active-site Proton acceptor is S525.

This sequence belongs to the IlvD/Edd family. Homodimer. [2Fe-2S] cluster is required as a cofactor. Requires Mg(2+) as cofactor.

It carries out the reaction (2R)-2,3-dihydroxy-3-methylbutanoate = 3-methyl-2-oxobutanoate + H2O. The enzyme catalyses (2R,3R)-2,3-dihydroxy-3-methylpentanoate = (S)-3-methyl-2-oxopentanoate + H2O. Its pathway is amino-acid biosynthesis; L-isoleucine biosynthesis; L-isoleucine from 2-oxobutanoate: step 3/4. It participates in amino-acid biosynthesis; L-valine biosynthesis; L-valine from pyruvate: step 3/4. Its function is as follows. Functions in the biosynthesis of branched-chain amino acids. Catalyzes the dehydration of (2R,3R)-2,3-dihydroxy-3-methylpentanoate (2,3-dihydroxy-3-methylvalerate) into 2-oxo-3-methylpentanoate (2-oxo-3-methylvalerate) and of (2R)-2,3-dihydroxy-3-methylbutanoate (2,3-dihydroxyisovalerate) into 2-oxo-3-methylbutanoate (2-oxoisovalerate), the penultimate precursor to L-isoleucine and L-valine, respectively. The chain is Dihydroxy-acid dehydratase from Shewanella baltica (strain OS155 / ATCC BAA-1091).